A 156-amino-acid chain; its full sequence is Small ribosomal subunit protein uS7 (156 aa).

It belongs to the universal ribosomal protein uS7 family. As to quaternary structure, part of the 30S ribosomal subunit. Contacts proteins S9 and S11.

One of the primary rRNA binding proteins, it binds directly to 16S rRNA where it nucleates assembly of the head domain of the 30S subunit. Is located at the subunit interface close to the decoding center, probably blocks exit of the E-site tRNA. The chain is Small ribosomal subunit protein uS7 from Janthinobacterium sp. (strain Marseille) (Minibacterium massiliensis).